Here is an 82-residue protein sequence, read N- to C-terminus: Large ribosomal subunit protein uL23 (82 aa).

This sequence belongs to the universal ribosomal protein uL23 family. In terms of assembly, part of the 50S ribosomal subunit. Contacts protein L29.

Binds to 23S rRNA. One of the proteins that surrounds the polypeptide exit tunnel on the outside of the ribosome. In Picrophilus torridus (strain ATCC 700027 / DSM 9790 / JCM 10055 / NBRC 100828 / KAW 2/3), this protein is Large ribosomal subunit protein uL23.